Here is a 289-residue protein sequence, read N- to C-terminus: MSGFSTEERAAPFSLEYRVFLKNEKGQYISPFHDIPIYADKDVFHMVVEVPRWSNAKMEIATKDPLNPIKQDVKKGKLRYVANLFPYKGYIWNYGAIPQTWEDPGHNDKHTGCCGDNDPIDVCEIGSKVCARGEIIGVKVLGILAMIDEGETDWKVIAINVDDPDAANYNDINDVKRLKPGYLEATVDWFRRYKVPDGKPENEFAFNAEFKDKDFAIDIIKSTHDHWKALVTKKTNGKGISCMNTTLSESPFKCDPDAARAIVDALPPPCESACTVPTDVDKWFHHQKN.

Ser2 bears the N-acetylserine mark. Lys57 bears the N6-acetyllysine mark. The Mg(2+) site is built by Asp116, Asp121, and Asp153. Lys228 bears the N6-acetyllysine mark. Ser250 carries the post-translational modification Phosphoserine.

Belongs to the PPase family. As to quaternary structure, homodimer. Mg(2+) is required as a cofactor. In terms of tissue distribution, expressed ubiquitously.

It is found in the cytoplasm. It carries out the reaction diphosphate + H2O = 2 phosphate + H(+). This is Inorganic pyrophosphatase (PPA1) from Homo sapiens (Human).